The following is an 87-amino-acid chain: Small ribosomal subunit protein uS17 (87 aa).

The protein belongs to the universal ribosomal protein uS17 family. As to quaternary structure, part of the 30S ribosomal subunit.

One of the primary rRNA binding proteins, it binds specifically to the 5'-end of 16S ribosomal RNA. This is Small ribosomal subunit protein uS17 from Dichelobacter nodosus (strain VCS1703A).